The following is a 159-amino-acid chain: MRCPFCGSDNTSVKDSRAAEDDTAVRRRRVCESCGARFTTFERVQLREIIVVKRDGKRSLFDREKLQRSILIALRKRPVDRDRIDQMVSGIVRKLESGGETEVPSSEVGELVMEALKRVDPVGYVRYASVYRDFKDPSDFAQFIEKAALEDEDDDADGK.

A zinc finger spans residues 3–34 (CPFCGSDNTSVKDSRAAEDDTAVRRRRVCESC). In terms of domain architecture, ATP-cone spans 49–139 (IIVVKRDGKR…VYRDFKDPSD (91 aa)).

The protein belongs to the NrdR family. It depends on Zn(2+) as a cofactor.

In terms of biological role, negatively regulates transcription of bacterial ribonucleotide reductase nrd genes and operons by binding to NrdR-boxes. The polypeptide is Transcriptional repressor NrdR (Hyphomonas neptunium (strain ATCC 15444)).